The sequence spans 65 residues: Large ribosomal subunit protein bL35 (65 aa).

2 stretches are compositionally biased toward basic residues: residues 1 to 15 (MPKM…KRFT) and 26 to 44 (QAFK…KRQL). The segment at 1 to 65 (MPKMKTKKSA…KSVRAMMPYA (65 aa)) is disordered.

This sequence belongs to the bacterial ribosomal protein bL35 family.

The protein is Large ribosomal subunit protein bL35 of Cupriavidus metallidurans (strain ATCC 43123 / DSM 2839 / NBRC 102507 / CH34) (Ralstonia metallidurans).